The chain runs to 100 residues: Small ribosomal subunit protein uS14c (100 aa).

Belongs to the universal ribosomal protein uS14 family. In terms of assembly, part of the 30S ribosomal subunit.

Its subcellular location is the plastid. The protein localises to the chloroplast. Its function is as follows. Binds 16S rRNA, required for the assembly of 30S particles. The sequence is that of Small ribosomal subunit protein uS14c from Gracilaria tenuistipitata var. liui (Red alga).